The chain runs to 238 residues: tRNA (guanine-N(7)-)-methyltransferase (238 aa).

Glu70, Asp95, Asp122, and Asp145 together coordinate S-adenosyl-L-methionine. Asp145 is a catalytic residue. Substrate-binding positions include Lys149, Asp181, and 216–219 (TKFE).

The protein belongs to the class I-like SAM-binding methyltransferase superfamily. TrmB family.

It catalyses the reaction guanosine(46) in tRNA + S-adenosyl-L-methionine = N(7)-methylguanosine(46) in tRNA + S-adenosyl-L-homocysteine. The protein operates within tRNA modification; N(7)-methylguanine-tRNA biosynthesis. Functionally, catalyzes the formation of N(7)-methylguanine at position 46 (m7G46) in tRNA. In Neisseria gonorrhoeae (strain ATCC 700825 / FA 1090), this protein is tRNA (guanine-N(7)-)-methyltransferase.